A 351-amino-acid polypeptide reads, in one-letter code: Putative aryl-alcohol dehydrogenase C977.14c (351 aa).

Ser113 is modified (phosphoserine).

It belongs to the aldo/keto reductase family. Aldo/keto reductase 2 subfamily.

It localises to the cytoplasm. Its subcellular location is the nucleus. The chain is Putative aryl-alcohol dehydrogenase C977.14c from Schizosaccharomyces pombe (strain 972 / ATCC 24843) (Fission yeast).